Reading from the N-terminus, the 137-residue chain is Ribosome-binding factor A (137 aa).

The protein belongs to the RbfA family. As to quaternary structure, monomer. Binds 30S ribosomal subunits, but not 50S ribosomal subunits or 70S ribosomes.

Its subcellular location is the cytoplasm. One of several proteins that assist in the late maturation steps of the functional core of the 30S ribosomal subunit. Associates with free 30S ribosomal subunits (but not with 30S subunits that are part of 70S ribosomes or polysomes). Required for efficient processing of 16S rRNA. May interact with the 5'-terminal helix region of 16S rRNA. The protein is Ribosome-binding factor A of Synechococcus sp. (strain ATCC 27144 / PCC 6301 / SAUG 1402/1) (Anacystis nidulans).